Consider the following 666-residue polypeptide: MLRTCDITHIKNNYEAIIWKGERNCSTISTKYPNSAIFYKKRFIMLTPELGFAHSYNQQVKPLYTFCEKQRHLKNRKPLTILPSLTRKLQEMKFLPASDKSFESQYTEFLESFKILYREPLFLQIDGFIKDFRKWIKGEFNDFGDTRKIQLEPFQKNILIHVIFFIAVTKLPALANRVINYLTHVFDIEFVNESTLNTLKQKTNVFLVPRRHGKTWFIVPIISFLLKNIEGISIGYVAHQKHVSHFVMKEVEFKCRRMFPEKTITCLDNVITIDHQNIKSTALFASCYNTHSIRGQSFNLLIVDESHFIKKDAFSTILGFLPQASTKILFISSTNSGNHSTSFLMKLNNSPFEMLSVVSYVCEDHAHMLNERGNATACSCYRLHKPKFISINAEVKKTANLFLEGAFIHEIMGGATCNVINDVLITEQGQTEFEFFRYSTINKNLIPFLGKDLYVYLDPAYTGNRRASGTGIAAIGTYLDQYIVYGMEHYFLESLMTSSDTAIAECAAHMILSILDLHPFFTEVKIIIEGNSNQASAVKIACIIKENITANKSIQVTFFHTPDQNQIAQPFYLLGKEKKLAVEFFISNFNSGNIKASQELISFTIKITYDPVEYALEQIRNIHQISVNNYITYSAKKQACSDDLIIAIIMAIYVCSGNSSASFREI.

Positions 208–215 (VPRRHGKT) match the Walker A motif motif. The Walker B motif signature appears at 300–305 (LLIVDE). The For ATPase activity role is filled by Glu305. Residues Asp458, Glu529, and Asp643 each act as for nuclease activity in the active site.

Belongs to the herpesviridae TRM3 protein family. Interacts with the terminase subunits TRM1 and TRM2. Interacts with portal protein.

The protein resides in the host nucleus. Its function is as follows. Component of the molecular motor that translocates viral genomic DNA in empty capsid during DNA packaging. Forms a tripartite terminase complex together with TRM1 and TRM2 in the host cytoplasm. Once the complex reaches the host nucleus, it interacts with the capsid portal vertex. This portal forms a ring in which genomic DNA is translocated into the capsid. TRM3 carries an RNase H-like nuclease activity that plays an important role for the cleavage of concatemeric viral DNA into unit length genomes. The sequence is that of Tripartite terminase subunit 3 from Homo sapiens (Human).